A 450-amino-acid polypeptide reads, in one-letter code: Tubulin alpha-1 chain (450 aa).

GTP is bound by residues Gln11, Glu71, Gly144, Thr145, Thr179, Asn206, and Asn228. Glu71 is a Mg(2+) binding site. Residue Glu254 is part of the active site.

This sequence belongs to the tubulin family. In terms of assembly, dimer of alpha and beta chains. A typical microtubule is a hollow water-filled tube with an outer diameter of 25 nm and an inner diameter of 15 nM. Alpha-beta heterodimers associate head-to-tail to form protofilaments running lengthwise along the microtubule wall with the beta-tubulin subunit facing the microtubule plus end conferring a structural polarity. Microtubules usually have 13 protofilaments but different protofilament numbers can be found in some organisms and specialized cells. Mg(2+) is required as a cofactor. In terms of processing, undergoes a tyrosination/detyrosination cycle, the cyclic removal and re-addition of a C-terminal tyrosine residue by the enzymes tubulin tyrosine carboxypeptidase (TTCP) and tubulin tyrosine ligase (TTL), respectively.

It is found in the cytoplasm. The protein resides in the cytoskeleton. It catalyses the reaction GTP + H2O = GDP + phosphate + H(+). Functionally, tubulin is the major constituent of microtubules, a cylinder consisting of laterally associated linear protofilaments composed of alpha- and beta-tubulin heterodimers. Microtubules grow by the addition of GTP-tubulin dimers to the microtubule end, where a stabilizing cap forms. Below the cap, tubulin dimers are in GDP-bound state, owing to GTPase activity of alpha-tubulin. In Hordeum vulgare (Barley), this protein is Tubulin alpha-1 chain (TUBA1).